The primary structure comprises 172 residues: Large ribosomal subunit protein uL10 (172 aa).

Belongs to the universal ribosomal protein uL10 family. As to quaternary structure, part of the ribosomal stalk of the 50S ribosomal subunit. The N-terminus interacts with L11 and the large rRNA to form the base of the stalk. The C-terminus forms an elongated spine to which L12 dimers bind in a sequential fashion forming a multimeric L10(L12)X complex.

In terms of biological role, forms part of the ribosomal stalk, playing a central role in the interaction of the ribosome with GTP-bound translation factors. This is Large ribosomal subunit protein uL10 (rplJ) from Liberibacter africanus subsp. capensis.